We begin with the raw amino-acid sequence, 95 residues long: MAYHWQVISRLLIALLRVYKLVISPLLGPRCRFAPSCSDYAMTAIGRFGPLRGSWLAARRLGRCHPFHPGGFDPVPDAPTSPSPSSSCSCKGPHP.

The segment at 72 to 95 (FDPVPDAPTSPSPSSSCSCKGPHP) is disordered. Residues 83–95 (SPSSSCSCKGPHP) are compositionally biased toward low complexity.

It belongs to the UPF0161 family.

The protein localises to the cell inner membrane. Could be involved in insertion of integral membrane proteins into the membrane. This Xanthomonas axonopodis pv. citri (strain 306) protein is Putative membrane protein insertion efficiency factor.